The following is a 295-amino-acid chain: 4-diphosphocytidyl-2-C-methyl-D-erythritol kinase (295 aa).

K22 is an active-site residue. 106 to 116 (PAGGGFGGGSS) contacts ATP. D148 is a catalytic residue.

Belongs to the GHMP kinase family. IspE subfamily.

The enzyme catalyses 4-CDP-2-C-methyl-D-erythritol + ATP = 4-CDP-2-C-methyl-D-erythritol 2-phosphate + ADP + H(+). It participates in isoprenoid biosynthesis; isopentenyl diphosphate biosynthesis via DXP pathway; isopentenyl diphosphate from 1-deoxy-D-xylulose 5-phosphate: step 3/6. Its function is as follows. Catalyzes the phosphorylation of the position 2 hydroxy group of 4-diphosphocytidyl-2C-methyl-D-erythritol. The sequence is that of 4-diphosphocytidyl-2-C-methyl-D-erythritol kinase from Xanthomonas euvesicatoria pv. vesicatoria (strain 85-10) (Xanthomonas campestris pv. vesicatoria).